Here is a 926-residue protein sequence, read N- to C-terminus: Protein O-mannosyl-transferase Tmtc3 (926 aa).

Positions 1–26 (MSTNPNPGIHQYAPSTLPREREREGA) are disordered. Over 1 to 36 (MSTNPNPGIHQYAPSTLPREREREGATNSPQRNLLE) the chain is Cytoplasmic. The helical transmembrane segment at 37–57 (FLCICVACIVCYYNSTQCGLV) threads the bilayer. At 58–114 (FDDISAIRDNKDLRPHTPLINVFLNDFWGTPMRKEQSHKSYRPLTVLTFRFNYLLHA) the chain is on the extracellular side. Residues 115 to 135 (LEPFGYHLVNLLLHLSVCLLW) form a helical membrane-spanning segment. The Cytoplasmic portion of the chain corresponds to 136-169 (RRVCRLLLRQCAASGSNAISAPSSSSVSQLNTCA). The chain crosses the membrane as a helical span at residues 170 to 190 (FVASLLFAVHPVHTEAVTGVV). Residues 191-192 (GR) lie on the Extracellular side of the membrane. Residues 193–213 (AELLSSICFLAAFLSYAKSVG) form a helical membrane-spanning segment. Over 214-222 (DSGCPRRTN) the chain is Cytoplasmic. A run of 2 helical transmembrane segments spans residues 223-239 (WLTL…ASML) and 240-259 (CKEQ…LFVV). The Cytoplasmic portion of the chain corresponds to 260–303 (HQLRPLHLCHFVLRLFDERTEQQSPKLANPSGIRRWSSSTLWKR). Residues 304–324 (LSFLVGITLTLLVGRVYVMGS) traverse the membrane as a helical segment. The Extracellular portion of the chain corresponds to 325–345 (QLPIFTRFDNPASAADTPERQ). The chain crosses the membrane as a helical span at residues 346-366 (LTYGYLIYLNCWLLLCPSLLC). Residues 367 to 384 (CDWTMGTVPLLQGFTDSR) lie on the Cytoplasmic side of the membrane. A helical transmembrane segment spans residues 385–405 (NITTLLTFLALGAMVAKTCFT). Topologically, residues 406–419 (RNLALSRTLIMCLG) are extracellular. A helical membrane pass occupies residues 420–440 (WMVLPFLPASNLFFPVGFVVA). At 441-442 (ER) the chain is on the cytoplasmic side. The helical transmembrane segment at 443-463 (ILYMPSMGYCLLVAYGFEQLQ) threads the bilayer. Topologically, residues 464-926 (RRGSLSWQRF…RPTHKSRKRS (463 aa)) are extracellular. TPR repeat units follow at residues 514-547 (AKLY…QTDD), 548-581 (IGAH…FPQA), 596-630 (LNVF…RSDY), 631-664 (VQAY…DNEN), 665-698 (ADIY…YPEH), 736-769 (EKVY…KADF), 770-803 (RSAL…HPSH), 805-838 (KGLI…DPHN), and 839-872 (TQGL…APAE). Asn609 and Asn645 each carry an N-linked (GlcNAc...) asparagine glycan.

Belongs to the TMTC family.

The protein resides in the membrane. Its subcellular location is the endoplasmic reticulum. It catalyses the reaction a di-trans,poly-cis-dolichyl beta-D-mannosyl phosphate + L-seryl-[protein] = 3-O-(alpha-D-mannosyl)-L-seryl-[protein] + a di-trans,poly-cis-dolichyl phosphate + H(+). It carries out the reaction a di-trans,poly-cis-dolichyl beta-D-mannosyl phosphate + L-threonyl-[protein] = 3-O-(alpha-D-mannosyl)-L-threonyl-[protein] + a di-trans,poly-cis-dolichyl phosphate + H(+). Its pathway is protein modification; protein glycosylation. Functionally, transfers mannosyl residues to the hydroxyl group of serine or threonine residues. In Drosophila melanogaster (Fruit fly), this protein is Protein O-mannosyl-transferase Tmtc3.